Here is a 98-residue protein sequence, read N- to C-terminus: Lipolysis-activating peptide 1-alpha chain (98 aa).

Residues 1 to 22 (MMKFVLFGMIVILFSLMGSIRG) form the signal peptide. The LCN-type CS-alpha/beta domain occupies 26–89 (PGNYPTNAYG…IWNAVKNHCT (64 aa)). 3 disulfide bridges follow: cysteine 40/cysteine 63, cysteine 49/cysteine 68, and cysteine 53/cysteine 70. The residue at position 96 (asparagine 96) is an Asparagine amide.

The protein belongs to the long (3 C-C) scorpion toxin superfamily. In terms of assembly, monomer (edited version) and heterodimer (non-edited version) of this alpha chain and a beta chain (AC Q95P90). As to expression, expressed by the venom gland.

It is found in the secreted. Its function is as follows. The heterodimer non-edited LVP1 induces lipolysis in rat adipocytes. Induction of lipolysis by LVP1 appears to be mediated through the beta-2 adrenergic receptor pathway (ADRB2). In terms of biological role, the edited BmKBTx, similar to beta-toxins, may modulate voltage-gated sodium channels (Nav) and may block voltage-gated potassium channels (Kv). Seems to be a rare component in the venom. This Olivierus martensii (Manchurian scorpion) protein is Lipolysis-activating peptide 1-alpha chain (LVP1a).